The following is a 463-amino-acid chain: Soluble pyridine nucleotide transhydrogenase (463 aa).

35–44 (EDKPTVGGNC) contributes to the FAD binding site.

Belongs to the class-I pyridine nucleotide-disulfide oxidoreductase family. It depends on FAD as a cofactor.

The protein resides in the cytoplasm. It catalyses the reaction NAD(+) + NADPH = NADH + NADP(+). Its function is as follows. Conversion of NADPH, generated by peripheral catabolic pathways, to NADH, which can enter the respiratory chain for energy generation. This chain is Soluble pyridine nucleotide transhydrogenase, found in Marinobacter nauticus (strain ATCC 700491 / DSM 11845 / VT8) (Marinobacter aquaeolei).